Here is a 556-residue protein sequence, read N- to C-terminus: Formate--tetrahydrofolate ligase (556 aa).

65–72 (TPAGEGKS) contacts ATP.

The protein belongs to the formate--tetrahydrofolate ligase family.

The catalysed reaction is (6S)-5,6,7,8-tetrahydrofolate + formate + ATP = (6R)-10-formyltetrahydrofolate + ADP + phosphate. It participates in one-carbon metabolism; tetrahydrofolate interconversion. The polypeptide is Formate--tetrahydrofolate ligase (Clostridium beijerinckii (strain ATCC 51743 / NCIMB 8052) (Clostridium acetobutylicum)).